The primary structure comprises 198 residues: NAD(P)H dehydrogenase (quinone) (198 aa).

Residues 6–190 (ILVLYYSRHG…LCRALGKRLA (185 aa)) enclose the Flavodoxin-like domain. Residues 12–17 (SRHGAT), 79–81 (TRF), 114–120 (STASLHG), and His-135 contribute to the FMN site.

Belongs to the WrbA family. As to quaternary structure, homodimer. FMN serves as cofactor.

The enzyme catalyses a quinone + NADH + H(+) = a quinol + NAD(+). It catalyses the reaction a quinone + NADPH + H(+) = a quinol + NADP(+). The sequence is that of NAD(P)H dehydrogenase (quinone) from Pseudomonas aeruginosa (strain ATCC 15692 / DSM 22644 / CIP 104116 / JCM 14847 / LMG 12228 / 1C / PRS 101 / PAO1).